The primary structure comprises 163 residues: Neurotrophin-3 (163 aa).

The N-terminal stretch at 1-3 (IQS) is a signal peptide. Residues 4-119 (TSMDQGILTE…VLNRTSRRKR (116 aa)) constitute a propeptide that is removed on maturation. N-linked (GlcNAc...) asparagine glycosylation occurs at Asn-112.

Belongs to the NGF-beta family.

It localises to the secreted. In terms of biological role, seems to promote the survival of visceral and proprioceptive sensory neurons. In Chilabothrus striatus (Haitian boa constrictor), this protein is Neurotrophin-3 (NTF3).